Reading from the N-terminus, the 305-residue chain is Tyrosine recombinase XerC (305 aa).

Residues Thr-4–Glu-95 form the Core-binding (CB) domain. Positions Leu-116–Thr-298 constitute a Tyr recombinase domain. Catalysis depends on residues Arg-159, Lys-182, His-250, Arg-253, and His-276. Catalysis depends on Tyr-285, which acts as the O-(3'-phospho-DNA)-tyrosine intermediate.

This sequence belongs to the 'phage' integrase family. XerC subfamily. In terms of assembly, forms a cyclic heterotetrameric complex composed of two molecules of XerC and two molecules of XerD.

The protein localises to the cytoplasm. Site-specific tyrosine recombinase, which acts by catalyzing the cutting and rejoining of the recombining DNA molecules. The XerC-XerD complex is essential to convert dimers of the bacterial chromosome into monomers to permit their segregation at cell division. It also contributes to the segregational stability of plasmids. The protein is Tyrosine recombinase XerC of Rickettsia africae (strain ESF-5).